The primary structure comprises 187 residues: Early nodulin-55-2 (187 aa).

Positions methionine 1–alanine 26 are cleaved as a signal peptide. Residues glutamate 27–serine 132 form the Phytocyanin domain. Asparagine 78, asparagine 116, and asparagine 134 each carry an N-linked (GlcNAc...) asparagine glycan. A disulfide bridge links cysteine 85 with cysteine 120. Residues lysine 138 to glycine 167 are disordered. A compositionally biased stretch (pro residues) spans serine 144–leucine 162.

This sequence belongs to the early nodulin-like (ENODL) family.

It localises to the symbiosome. The protein resides in the peribacteroid membrane. Its function is as follows. May act as a carbohydrate transporter. In Glycine max (Soybean), this protein is Early nodulin-55-2.